Here is a 407-residue protein sequence, read N- to C-terminus: Tryptophan synthase beta chain (407 aa).

Position 86 is an N6-(pyridoxal phosphate)lysine (K86).

Belongs to the TrpB family. Tetramer of two alpha and two beta chains. Pyridoxal 5'-phosphate is required as a cofactor.

It carries out the reaction (1S,2R)-1-C-(indol-3-yl)glycerol 3-phosphate + L-serine = D-glyceraldehyde 3-phosphate + L-tryptophan + H2O. Its pathway is amino-acid biosynthesis; L-tryptophan biosynthesis; L-tryptophan from chorismate: step 5/5. The beta subunit is responsible for the synthesis of L-tryptophan from indole and L-serine. The chain is Tryptophan synthase beta chain from Shewanella woodyi (strain ATCC 51908 / MS32).